The sequence spans 717 residues: Fatty acid oxidation complex subunit alpha (717 aa).

Residues 1-190 (MIHAGNAITV…KDGAVDAVVA (190 aa)) form an enoyl-CoA hydratase/isomerase region. Asp-298 contributes to the substrate binding site. The tract at residues 313–717 (HPVNQAAVLG…MAANNKKFYG (405 aa)) is 3-hydroxyacyl-CoA dehydrogenase. NAD(+)-binding positions include Met-326, Asp-345, 402–404 (VTE), Lys-409, and Ser-431. Catalysis depends on His-452, which acts as the For 3-hydroxyacyl-CoA dehydrogenase activity. Residue Asn-455 coordinates NAD(+). Asn-502 is a substrate binding site.

It in the N-terminal section; belongs to the enoyl-CoA hydratase/isomerase family. This sequence in the C-terminal section; belongs to the 3-hydroxyacyl-CoA dehydrogenase family. As to quaternary structure, heterotetramer of two alpha chains (FadB) and two beta chains (FadA).

It carries out the reaction a (3S)-3-hydroxyacyl-CoA + NAD(+) = a 3-oxoacyl-CoA + NADH + H(+). The catalysed reaction is a (3S)-3-hydroxyacyl-CoA = a (2E)-enoyl-CoA + H2O. The enzyme catalyses a 4-saturated-(3S)-3-hydroxyacyl-CoA = a (3E)-enoyl-CoA + H2O. It catalyses the reaction (3S)-3-hydroxybutanoyl-CoA = (3R)-3-hydroxybutanoyl-CoA. It carries out the reaction a (3Z)-enoyl-CoA = a 4-saturated (2E)-enoyl-CoA. The catalysed reaction is a (3E)-enoyl-CoA = a 4-saturated (2E)-enoyl-CoA. Its pathway is lipid metabolism; fatty acid beta-oxidation. Its function is as follows. Involved in the aerobic and anaerobic degradation of long-chain fatty acids via beta-oxidation cycle. Catalyzes the formation of 3-oxoacyl-CoA from enoyl-CoA via L-3-hydroxyacyl-CoA. It can also use D-3-hydroxyacyl-CoA and cis-3-enoyl-CoA as substrate. The protein is Fatty acid oxidation complex subunit alpha of Acinetobacter baumannii (strain AB307-0294).